The following is a 480-amino-acid chain: Probable WRKY transcription factor 61 (480 aa).

The tract at residues 30 to 108 (NQLMAKHNEP…RNYDDNEKSS (79 aa)) is disordered. Composition is skewed to basic and acidic residues over residues 57-66 (REKVNEREEL) and 84-106 (NKEE…DNEK). The WRKY DNA-binding region spans 185–251 (CETPTMNDGC…YEGTHNHPLP (67 aa)).

It localises to the nucleus. In terms of biological role, transcription factor. Interacts specifically with the W box (5'-(T)TGAC[CT]-3'), a frequently occurring elicitor-responsive cis-acting element. This Arabidopsis thaliana (Mouse-ear cress) protein is Probable WRKY transcription factor 61 (WRKY61).